A 104-amino-acid polypeptide reads, in one-letter code: MTDCRLAGSPTKRSPSLVKATTDGVVLEPSAFSIILGTLPSIIATAELVVPKSIPITASGILVDWKRVRIRSILCALKAFHDGNMLLEFKFLIMTSEIVTNALR.

This is an uncharacterized protein from Saccharomyces cerevisiae (strain ATCC 204508 / S288c) (Baker's yeast).